A 515-amino-acid polypeptide reads, in one-letter code: Galactose-1-phosphate uridylyltransferase (515 aa).

It belongs to the galactose-1-phosphate uridylyltransferase type 2 family.

The protein localises to the cytoplasm. The enzyme catalyses alpha-D-galactose 1-phosphate + UDP-alpha-D-glucose = alpha-D-glucose 1-phosphate + UDP-alpha-D-galactose. It functions in the pathway carbohydrate metabolism; galactose metabolism. Functionally, transfers the UMP unit from UDP-glucose (UDP-Glc) to Gal1P. Can also transfer the UMP unit to GlcNAc1P and GalNAc1P. Involved in the general galactose metabolism, and also involved in the lacto-N-biose I/galacto-N-biose (LNB/GNB) degradation pathway, which is important for host intestinal colonization by bifidobacteria. This Bifidobacterium longum subsp. longum (strain ATCC 15707 / DSM 20219 / JCM 1217 / NCTC 11818 / E194b) protein is Galactose-1-phosphate uridylyltransferase.